Reading from the N-terminus, the 163-residue chain is uncharacterized protein (163 aa).

This is an uncharacterized protein from Schizosaccharomyces pombe (strain 972 / ATCC 24843) (Fission yeast).